A 621-amino-acid polypeptide reads, in one-letter code: Membrane protein insertase YidC (621 aa).

A run of 6 helical transmembrane segments spans residues 1–21 (MDKN…GFSI), 363–383 (GWGL…KVLV), 436–456 (MGGC…FFFV), 486–506 (IPLL…TNIL), 527–547 (LMMY…SSGL), and 549–569 (YYYF…RKTT).

Belongs to the OXA1/ALB3/YidC family. Type 1 subfamily. Interacts with the Sec translocase complex via SecD. Specifically interacts with transmembrane segments of nascent integral membrane proteins during membrane integration.

It is found in the cell inner membrane. Its function is as follows. Required for the insertion and/or proper folding and/or complex formation of integral membrane proteins into the membrane. Involved in integration of membrane proteins that insert both dependently and independently of the Sec translocase complex, as well as at least some lipoproteins. Aids folding of multispanning membrane proteins. The protein is Membrane protein insertase YidC of Phocaeicola vulgatus (strain ATCC 8482 / DSM 1447 / JCM 5826 / CCUG 4940 / NBRC 14291 / NCTC 11154) (Bacteroides vulgatus).